Here is a 106-residue protein sequence, read N- to C-terminus: NADH dehydrogenase [ubiquinone] 1 beta subcomplex subunit 10-B (106 aa).

Residues 1 to 25 (MGRKKGLPEFEESAPDGFDPENPYK) form a disordered region.

Belongs to the complex I NDUFB10 subunit family. As to quaternary structure, complex I is composed of at least 49 different subunits.

The protein localises to the mitochondrion inner membrane. Functionally, accessory subunit of the mitochondrial membrane respiratory chain NADH dehydrogenase (Complex I), that is believed not to be involved in catalysis. Complex I functions in the transfer of electrons from NADH to the respiratory chain. The immediate electron acceptor for the enzyme is believed to be ubiquinone. The sequence is that of NADH dehydrogenase [ubiquinone] 1 beta subcomplex subunit 10-B from Arabidopsis thaliana (Mouse-ear cress).